A 153-amino-acid chain; its full sequence is Ribosome maturation factor RimP (153 aa).

This sequence belongs to the RimP family.

The protein resides in the cytoplasm. In terms of biological role, required for maturation of 30S ribosomal subunits. The sequence is that of Ribosome maturation factor RimP from Clostridium botulinum (strain ATCC 19397 / Type A).